The sequence spans 341 residues: Phosphate acyltransferase (341 aa).

It belongs to the PlsX family. As to quaternary structure, homodimer. Probably interacts with PlsY.

The protein resides in the cytoplasm. It carries out the reaction a fatty acyl-[ACP] + phosphate = an acyl phosphate + holo-[ACP]. It functions in the pathway lipid metabolism; phospholipid metabolism. Its function is as follows. Catalyzes the reversible formation of acyl-phosphate (acyl-PO(4)) from acyl-[acyl-carrier-protein] (acyl-ACP). This enzyme utilizes acyl-ACP as fatty acyl donor, but not acyl-CoA. The polypeptide is Phosphate acyltransferase (Pseudoalteromonas atlantica (strain T6c / ATCC BAA-1087)).